Consider the following 324-residue polypeptide: Alkanal monooxygenase beta chain (324 aa).

Belongs to the bacterial luciferase oxidoreductase family. As to quaternary structure, heterodimer of an alpha and a beta chain.

The enzyme catalyses a long-chain fatty aldehyde + FMNH2 + O2 = a long-chain fatty acid + hnu + FMN + H2O + 2 H(+). In terms of biological role, light-emitting reaction in luminous bacteria. The specific role of the beta subunit is unknown, but it is absolutely required for bioluminescence activity. In Photorhabdus laumondii subsp. laumondii (strain DSM 15139 / CIP 105565 / TT01) (Photorhabdus luminescens subsp. laumondii), this protein is Alkanal monooxygenase beta chain (luxB).